We begin with the raw amino-acid sequence, 318 residues long: NAC domain-containing protein 59 (318 aa).

The region spanning 24–174 (LPPGFRFHPT…ECVISRVFHT (151 aa)) is the NAC domain. Residues 121–180 (VGMKKTLVFYKGRAPKGVKTNWVMHEYRLEGKFAIDNLSKTAKNECVISRVFHTRTDGTK) mediate DNA binding.

In terms of tissue distribution, mostly expressed in root cortex, phloem, atrichoblast and quiescent center (QC), and, to a lower extent, in root endodermis, xylem, pericycle, columella and lateral root cap (LRC). Expressed in roots, cotyledons, very young leaves, senescing leaves, mature flowers and pollen.

Its subcellular location is the nucleus. Functionally, transcription activator that binds to DNA in promoters of target genes on a specific bipartite motif 5'-[AG]CGT[AG](4-5n)[AG][CT]ACGCAA-3'. Triggers the expression of senescence-associated genes during age-, salt- and dark-induced senescence through a regulatory network that may involve cross-talk with salt- and H(2)O(2)-dependent signaling pathways. This is NAC domain-containing protein 59 from Arabidopsis thaliana (Mouse-ear cress).